Here is a 126-residue protein sequence, read N- to C-terminus: Protein VraC (126 aa).

The polypeptide is Protein VraC (Staphylococcus haemolyticus (strain JCSC1435)).